Consider the following 298-residue polypeptide: DNA-binding transcriptional activator HetR (298 aa).

The active site involves serine 152.

This sequence belongs to the peptidase S48 family. Homodimer; disulfide-linked.

Controls heterocyst differentiation. Dimerization is required for DNA-binding. Has both a protease and a DNA-binding activity. This Nostoc sp. (strain PCC 9229) protein is DNA-binding transcriptional activator HetR.